The following is a 280-amino-acid chain: UDP-3-O-acyl-N-acetylglucosamine deacetylase (280 aa).

His-79, His-237, and Asp-241 together coordinate Zn(2+). His-264 serves as the catalytic Proton donor.

Belongs to the LpxC family. Zn(2+) is required as a cofactor.

The enzyme catalyses a UDP-3-O-[(3R)-3-hydroxyacyl]-N-acetyl-alpha-D-glucosamine + H2O = a UDP-3-O-[(3R)-3-hydroxyacyl]-alpha-D-glucosamine + acetate. It functions in the pathway glycolipid biosynthesis; lipid IV(A) biosynthesis; lipid IV(A) from (3R)-3-hydroxytetradecanoyl-[acyl-carrier-protein] and UDP-N-acetyl-alpha-D-glucosamine: step 2/6. Catalyzes the hydrolysis of UDP-3-O-myristoyl-N-acetylglucosamine to form UDP-3-O-myristoylglucosamine and acetate, the committed step in lipid A biosynthesis. This chain is UDP-3-O-acyl-N-acetylglucosamine deacetylase, found in Chlamydia felis (strain Fe/C-56) (Chlamydophila felis).